A 416-amino-acid polypeptide reads, in one-letter code: Serine/threonine-protein phosphatase PP2A-like PPG1 (416 aa).

4 residues coordinate Mn(2+): Asp-62, His-64, Asp-90, and Asn-122. The Proton donor role is filled by His-123. Residues His-173 and His-248 each contribute to the Mn(2+) site. A disordered region spans residues 363 to 391 (EDTLQGKSVNGINFDDELSTSDDTSGSGG).

The protein belongs to the PPP phosphatase family. PP-2A subfamily. The cofactor is Mn(2+).

The enzyme catalyses O-phospho-L-seryl-[protein] + H2O = L-seryl-[protein] + phosphate. It carries out the reaction O-phospho-L-threonyl-[protein] + H2O = L-threonyl-[protein] + phosphate. With respect to regulation, inhibited by okadaic acid, a specific inhibitor of serine/threonine phosphatases of types 1, 2A and 2B. Its function is as follows. Serine/threonine-protein phosphatase that plays an important role in controlling colony morphology, filament extension and agar invasion. Down-regulates expression of NRG1 and affects the expression of multiple filament-specific transcripts in response to serum and 37 degrees Celsius. Plays a crucial role in virulence in a mouse model of systemic candidiasis. This chain is Serine/threonine-protein phosphatase PP2A-like PPG1, found in Candida albicans (strain SC5314 / ATCC MYA-2876) (Yeast).